The sequence spans 176 residues: Ribosome maturation factor RimP (176 aa).

Residues 143-176 (LKPQTAKKKGRQEETEDMTLELDAVSRAVPEAEI) are disordered.

The protein belongs to the RimP family.

The protein resides in the cytoplasm. In terms of biological role, required for maturation of 30S ribosomal subunits. The sequence is that of Ribosome maturation factor RimP from Chlorobium luteolum (strain DSM 273 / BCRC 81028 / 2530) (Pelodictyon luteolum).